Consider the following 237-residue polypeptide: 1-(5-phosphoribosyl)-5-[(5-phosphoribosylamino)methylideneamino] imidazole-4-carboxamide isomerase (237 aa).

Residue Asp-8 is the Proton acceptor of the active site. The Proton donor role is filled by Asp-129.

The protein belongs to the HisA/HisF family.

Its subcellular location is the cytoplasm. The enzyme catalyses 1-(5-phospho-beta-D-ribosyl)-5-[(5-phospho-beta-D-ribosylamino)methylideneamino]imidazole-4-carboxamide = 5-[(5-phospho-1-deoxy-D-ribulos-1-ylimino)methylamino]-1-(5-phospho-beta-D-ribosyl)imidazole-4-carboxamide. It functions in the pathway amino-acid biosynthesis; L-histidine biosynthesis; L-histidine from 5-phospho-alpha-D-ribose 1-diphosphate: step 4/9. The chain is 1-(5-phosphoribosyl)-5-[(5-phosphoribosylamino)methylideneamino] imidazole-4-carboxamide isomerase from Roseiflexus castenholzii (strain DSM 13941 / HLO8).